The chain runs to 314 residues: Olfactory receptor 1E1 (314 aa).

The Extracellular portion of the chain corresponds to 1–25 (MMGQNQTSISDFLLLGLPIQPEQQN). Asn5 carries N-linked (GlcNAc...) asparagine glycosylation. A helical membrane pass occupies residues 26 to 49 (LCYALFLAMYLTTLLGNLLIIVLI). Topologically, residues 50–57 (RLDSHLHT) are cytoplasmic. Residues 58 to 79 (PMYLFLSNLSFSDLCFSSVTIP) traverse the membrane as a helical segment. Over 80–100 (KLLQNMQNQDPSIPYADCLTQ) the chain is Extracellular. The chain crosses the membrane as a helical span at residues 101–120 (MYFFLLFGDLESFLLVAMAY). Residues 121–139 (DRYVAICFPLHYTAIMSPM) lie on the Cytoplasmic side of the membrane. The chain crosses the membrane as a helical span at residues 140 to 158 (LCLALVALSWVLTTFHAML). Topologically, residues 159 to 195 (HTLLMARLCFCADNVIPHFFCDMSALLKLAFSDTRVN) are extracellular. Residues 196 to 219 (EWVIFIMGGLILVIPFLLILGSYA) traverse the membrane as a helical segment. The Cytoplasmic portion of the chain corresponds to 220 to 236 (RIVSSILKVPSSKGICK). A helical membrane pass occupies residues 237–259 (AFSTCGSHLSVVSLFYGTVIGLY). Residues 260 to 272 (LCSSANSSTLKDT) are Extracellular-facing. A helical membrane pass occupies residues 273 to 292 (VMAMMYTVVTPMLNPFIYSL). The Cytoplasmic segment spans residues 293-314 (RNRDMKGALSRVIHQKKTFFSL).

This sequence belongs to the G-protein coupled receptor 1 family.

The protein resides in the cell membrane. In terms of biological role, odorant receptor. This is Olfactory receptor 1E1 (OR1E1) from Homo sapiens (Human).